A 476-amino-acid chain; its full sequence is Angiotensinogen (476 aa).

Residues 1–24 (MAPAGLSLGATILCLLAWAGLAAG) form the signal peptide. A disulfide bridge links Cys42 with Cys161. The disordered stretch occupies residues 45–64 (LEKPSVETPADPTLTPVPIQ). Asn295 carries an N-linked (GlcNAc...) asparagine glycan.

The protein belongs to the serpin family. In response to low blood pressure, the enzyme renin/REN cleaves angiotensinogen to produce angiotensin-1. Angiotensin-1 is a substrate of ACE (angiotensin converting enzyme) that removes a dipeptide to yield the physiologically active peptide angiotensin-2. Angiotensin-1 and angiotensin-2 can be further processed to generate angiotensin-3, angiotensin-4. Angiotensin 1-9 is cleaved from angiotensin-1 by ACE2 and can be further processed by ACE to produce angiotensin 1-7, angiotensin 1-5 and angiotensin 1-4. Angiotensin 1-7 has also been proposed to be cleaved from angiotensin-2 by ACE2 or from angiotensin-1 by MME (neprilysin). Post-translationally, the disulfide bond is labile. Angiotensinogen is present in the circulation in a near 40:60 ratio with the oxidized disulfide-bonded form, which preferentially interacts with receptor-bound renin.

Its subcellular location is the secreted. In terms of biological role, essential component of the renin-angiotensin system (RAS), a potent regulator of blood pressure, body fluid and electrolyte homeostasis. Acts directly on vascular smooth muscle as a potent vasoconstrictor, affects cardiac contractility and heart rate through its action on the sympathetic nervous system, and alters renal sodium and water absorption through its ability to stimulate the zona glomerulosa cells of the adrenal cortex to synthesize and secrete aldosterone. Acts by binding to angiotensin receptors AGTR1 and AGTR2. Also binds the DEAR/FBXW7-AS1 receptor. Its function is as follows. Stimulates aldosterone release. Functionally, is a ligand for the G-protein coupled receptor MAS1. Has vasodilator and antidiuretic effects. Has an antithrombotic effect that involves MAS1-mediated release of nitric oxide from platelets. The protein is Angiotensinogen (AGT) of Ovis aries (Sheep).